A 197-amino-acid polypeptide reads, in one-letter code: Probable GTP-binding protein EngB (197 aa).

An EngB-type G domain is found at 26–197 (DLPEIALAGR…TSWDAILESL (172 aa)). Residues 34 to 41 (GRSNVGKS), 61 to 65 (GKTQS), 79 to 82 (DVPG), 146 to 149 (TKAD), and 178 to 180 (FSS) contribute to the GTP site. Residues serine 41 and threonine 63 each contribute to the Mg(2+) site.

It belongs to the TRAFAC class TrmE-Era-EngA-EngB-Septin-like GTPase superfamily. EngB GTPase family. It depends on Mg(2+) as a cofactor.

In terms of biological role, necessary for normal cell division and for the maintenance of normal septation. In Streptococcus mutans serotype c (strain ATCC 700610 / UA159), this protein is Probable GTP-binding protein EngB.